The following is a 344-amino-acid chain: Isopentenyl-diphosphate delta-isomerase (344 aa).

Residue 9 to 10 participates in substrate binding; the sequence is RK. FMN-binding positions include 65-67, serine 95, and asparagine 124; that span reads AMT. Glutamine 154 is a binding site for substrate. Glutamate 155 is a Mg(2+) binding site. FMN contacts are provided by residues lysine 185, threonine 215, 259–261, and 280–281; these read GVR and SG.

Belongs to the IPP isomerase type 2 family. Homooctamer. Dimer of tetramers. FMN is required as a cofactor. Requires NADPH as cofactor. Mg(2+) serves as cofactor.

It localises to the cytoplasm. The catalysed reaction is isopentenyl diphosphate = dimethylallyl diphosphate. Involved in the biosynthesis of isoprenoids. Catalyzes the 1,3-allylic rearrangement of the homoallylic substrate isopentenyl (IPP) to its allylic isomer, dimethylallyl diphosphate (DMAPP). The protein is Isopentenyl-diphosphate delta-isomerase of Lacticaseibacillus casei (strain BL23) (Lactobacillus casei).